Consider the following 226-residue polypeptide: Putative O-methyltransferase Mvan_4497 (226 aa).

S-adenosyl-L-methionine contacts are provided by residues valine 53, glutamate 75, 77–78, serine 83, aspartate 101, and valine 102; that span reads GT. Aspartate 149 lines the substrate pocket.

It belongs to the class I-like SAM-binding methyltransferase superfamily. Cation-dependent O-methyltransferase family.

The chain is Putative O-methyltransferase Mvan_4497 from Mycolicibacterium vanbaalenii (strain DSM 7251 / JCM 13017 / BCRC 16820 / KCTC 9966 / NRRL B-24157 / PYR-1) (Mycobacterium vanbaalenii).